Consider the following 423-residue polypeptide: Serine--tRNA ligase 2 (423 aa).

231-233 (TAE) contributes to the L-serine binding site. 262-264 (RSE) serves as a coordination point for ATP. Position 285 (Glu285) interacts with L-serine. Residue 349-352 (EISS) coordinates ATP. Ser384 is an L-serine binding site.

It belongs to the class-II aminoacyl-tRNA synthetase family. Type-1 seryl-tRNA synthetase subfamily. In terms of assembly, homodimer. The tRNA molecule binds across the dimer.

The protein resides in the cytoplasm. The catalysed reaction is tRNA(Ser) + L-serine + ATP = L-seryl-tRNA(Ser) + AMP + diphosphate + H(+). It catalyses the reaction tRNA(Sec) + L-serine + ATP = L-seryl-tRNA(Sec) + AMP + diphosphate + H(+). Its pathway is aminoacyl-tRNA biosynthesis; selenocysteinyl-tRNA(Sec) biosynthesis; L-seryl-tRNA(Sec) from L-serine and tRNA(Sec): step 1/1. Its function is as follows. Catalyzes the attachment of serine to tRNA(Ser). Is also able to aminoacylate tRNA(Sec) with serine, to form the misacylated tRNA L-seryl-tRNA(Sec), which will be further converted into selenocysteinyl-tRNA(Sec). This Enterococcus faecalis (strain ATCC 700802 / V583) protein is Serine--tRNA ligase 2.